The sequence spans 357 residues: Queuosine-tRNA galactosyltransferase (357 aa).

This sequence belongs to the glycosyltransferase 2 family.

The protein localises to the cytoplasm. The enzyme catalyses queuosine(34) in tRNA(Tyr) + UDP-alpha-D-galactose = O-5''-beta-D-galactosylqueuosine(34) in tRNA(Tyr) + UDP + H(+). Glycosyltransferase that specifically catalyzes galactosylation of cytoplasmic tRNA(Tyr) modified with queuosine at position 34 (queuosine(34)). Galactosylates the cyclopentene hydroxyl group of queuosine(34) in tRNA(Tyr) to form galactosyl-queuosine(34). Mannosylation of queuosine(34) in tRNA(Tyr) is required to slow-down elongation at cognate codons UAC and suppress stop codon readthrough, thereby regulating protein translation. The sequence is that of Queuosine-tRNA galactosyltransferase from Mus musculus (Mouse).